The chain runs to 154 residues: Nucleoside diphosphate kinase A2 (154 aa).

Residues Lys13, Phe61, Arg89, Thr95, Arg106, and Asn116 each coordinate ATP. The active-site Pros-phosphohistidine intermediate is His119.

Belongs to the NDK family. Mg(2+) is required as a cofactor.

It localises to the cytoplasm. It catalyses the reaction a 2'-deoxyribonucleoside 5'-diphosphate + ATP = a 2'-deoxyribonucleoside 5'-triphosphate + ADP. It carries out the reaction a ribonucleoside 5'-diphosphate + ATP = a ribonucleoside 5'-triphosphate + ADP. Functionally, major role in the synthesis of nucleoside triphosphates other than ATP. The ATP gamma phosphate is transferred to the NDP beta phosphate via a ping-pong mechanism, using a phosphorylated active-site intermediate. This chain is Nucleoside diphosphate kinase A2, found in Xenopus laevis (African clawed frog).